Reading from the N-terminus, the 175-residue chain is Ribosome maturation factor RimP (175 aa).

The tract at residues 152 to 175 is disordered; the sequence is EFNRPTDGPGDDGDDGGDDEAGEA. Over residues 160-175 the composition is skewed to acidic residues; sequence PGDDGDDGGDDEAGEA.

The protein belongs to the RimP family.

It is found in the cytoplasm. Its function is as follows. Required for maturation of 30S ribosomal subunits. The protein is Ribosome maturation factor RimP of Nocardioides sp. (strain ATCC BAA-499 / JS614).